Consider the following 101-residue polypeptide: Acylphosphatase (101 aa).

The region spanning 12-98 is the Acylphosphatase-like domain; it reads RAHVFVTGRV…EGLRGFEVKR (87 aa). Catalysis depends on residues Arg-27 and Asn-45.

Belongs to the acylphosphatase family.

The enzyme catalyses an acyl phosphate + H2O = a carboxylate + phosphate + H(+). This chain is Acylphosphatase (acyP), found in Nostoc sp. (strain PCC 7120 / SAG 25.82 / UTEX 2576).